The chain runs to 131 residues: Riboflavin kinase (131 aa).

11 to 16 (GLQKAG) provides a ligand contact to CDP. 2 residues coordinate Mg(2+): T40 and N42. Positions 98 and 106 each coordinate FMN. Residue 111 to 114 (EKLR) participates in CDP binding.

It belongs to the archaeal riboflavin kinase family. Mg(2+) serves as cofactor.

The catalysed reaction is riboflavin + CTP = CDP + FMN + H(+). The protein operates within cofactor biosynthesis; FMN biosynthesis; FMN from riboflavin (CTP route): step 1/1. In terms of biological role, catalyzes the CTP-dependent phosphorylation of riboflavin (vitamin B2) to form flavin mononucleotide (FMN). The sequence is that of Riboflavin kinase from Methanosphaera stadtmanae (strain ATCC 43021 / DSM 3091 / JCM 11832 / MCB-3).